We begin with the raw amino-acid sequence, 457 residues long: Probable xyloglucan 6-xylosyltransferase 5 (457 aa).

Positions 1-40 are disordered; that stretch reads MGQDGSPAHKRPSGSGGGLPTTTLTNGGGRGGRGGLLPRG. Over 1–51 the chain is Cytoplasmic; that stretch reads MGQDGSPAHKRPSGSGGGLPTTTLTNGGGRGGRGGLLPRGRQMQKTFNNIK. Gly residues predominate over residues 26–37; that stretch reads NGGGRGGRGGLL. A helical; Signal-anchor for type II membrane protein membrane pass occupies residues 52–72; the sequence is ITILCGFVTILVLRGTIGVGN. Residues 73-457 are Lumenal-facing; it reads LGSSSADAVN…RTPVETKPQN (385 aa). The tract at residues 97–116 is disordered; that stretch reads RSDSDPTDLDEPQEGDMNPN. Over residues 101–110 the composition is skewed to acidic residues; sequence DPTDLDEPQE. 2 N-linked (GlcNAc...) asparagine glycosylation sites follow: Asn116 and Asn432.

This sequence belongs to the glycosyltransferase 34 family. As to quaternary structure, interacts with XXT2 and CSLC4. Interacts with FUT1 and XLT2. Highly expressed in roots, stems and cauline leaves, and at lower levels in rosette leaves, flowers and siliques.

The protein resides in the golgi apparatus membrane. It catalyses the reaction Transfers an alpha-D-xylosyl residue from UDP-D-xylose to a glucose residue in xyloglucan, forming an alpha-(1-&gt;6)-D-xylosyl-D-glucose linkage.. Probable xyloglucan xylosyltransferase involved in the biosynthesis of xyloglucan in roots. May act in association with XXT1 and XXT2. Associates with other xyloglucan-synthesizing enzymes to form multiprotein complexes for xyloglucan synthesis in the Golgi. The protein is Probable xyloglucan 6-xylosyltransferase 5 of Arabidopsis thaliana (Mouse-ear cress).